Reading from the N-terminus, the 136-residue chain is Histone H2B.5 (136 aa).

Residues 1–36 (MAPKAEKKPAAEKKPVETEKKPKAEKRVPGKDGGAD) show a composition bias toward basic and acidic residues. Residues 1-44 (MAPKAEKKPAAEKKPVETEKKPKAEKRVPGKDGGADKKKKKAKK) form a disordered region. Residues Lys7 and Lys26 each carry the N6-acetyllysine modification. Residue Lys132 forms a Glycyl lysine isopeptide (Lys-Gly) (interchain with G-Cter in ubiquitin) linkage.

Belongs to the histone H2B family. In terms of assembly, the nucleosome is a histone octamer containing two molecules each of H2A, H2B, H3 and H4 assembled in one H3-H4 heterotetramer and two H2A-H2B heterodimers. The octamer wraps approximately 147 bp of DNA. Post-translationally, can be acetylated to form H2BK6ac and H2BK33ac. In terms of processing, monoubiquitinated to form H2BK143ub1; may give a specific tag for epigenetic transcriptional activation.

The protein resides in the nucleus. It is found in the chromosome. Functionally, core component of nucleosome. Nucleosomes wrap and compact DNA into chromatin, limiting DNA accessibility to the cellular machineries which require DNA as a template. Histones thereby play a central role in transcription regulation, DNA repair, DNA replication and chromosomal stability. DNA accessibility is regulated via a complex set of post-translational modifications of histones, also called histone code, and nucleosome remodeling. In Triticum aestivum (Wheat), this protein is Histone H2B.5.